The sequence spans 83 residues: Hainantoxin-III 9 (83 aa).

The first 21 residues, 1 to 21 (MKASMFLALAGLALLFVVCYA), serve as a signal peptide directing secretion. Residues 22–48 (SESEEKEFPIELLSKIFAVDVFKGEER) constitute a propeptide that is removed on maturation. Intrachain disulfides connect Cys50–Cys65, Cys57–Cys70, and Cys64–Cys77. The residue at position 81 (Leu81) is a Leucine amide.

This sequence belongs to the neurotoxin 10 (Hwtx-1) family. 15 (Hntx-3) subfamily. Monomer. As to expression, expressed by the venom gland.

It localises to the secreted. In terms of biological role, selective antagonist of neuronal tetrodotoxin (TTX)-sensitive voltage-gated sodium channels (IC(50)=1270 nM on Nav1.1/SCN1A, 270 nM on Nav1.2/SCN2A, 491 nM on Nav1.3/SCN3A and 232 nM on Nav1.7/SCN9A). This toxin suppress Nav1.7 current amplitude without significantly altering the activation, inactivation, and repriming kinetics. Short extreme depolarizations partially activate the toxin-bound channel, indicating voltage-dependent inhibition of this toxin. This toxin increases the deactivation of the Nav1.7 current after extreme depolarizations. The toxin-Nav1.7 complex is gradually dissociated upon prolonged strong depolarizations in a voltage-dependent manner, and the unbound toxin rebinds to Nav1.7 after a long repolarization. Moreover, analysis of chimeric channels showed that the DIIS3-S4 linker is critical for toxin binding to Nav1.7. These data are consistent with this toxin interacting with Nav1.7 site 4 and trapping the domain II voltage sensor in the closed state. This Cyriopagopus hainanus (Chinese bird spider) protein is Hainantoxin-III 9.